We begin with the raw amino-acid sequence, 683 residues long: Transcription factor SFP1 (683 aa).

Disordered regions lie at residues 156–178, 305–324, 332–357, 399–420, 498–517, and 535–573; these read ATNT…PYHR, DSNS…NIIQ, VNHT…TANP, SNSP…NSGI, HNSM…YNTF, and IDDI…NNYK. Over residues 160–173 the composition is skewed to polar residues; that stretch reads LQIQQPTKRPSVSN. The prion domain (PrD) stretch occupies residues 230–458; that stretch reads NTTNMSQIPM…NYSLNKTSRN (229 aa). Residues 535–557 show a composition bias toward acidic residues; sequence IDDIDDDDDVDDDDDDDDDDDTE. Residues 558–573 show a composition bias toward polar residues; the sequence is NGSSSNGKSVHNNNYK. C2H2-type zinc fingers lie at residues 598–623 and 659–683; these read FKCP…LHGH and YRCE…HSTH.

Interacts with the target of rapamycin complex 1 (TORC1) in a rapamycin-dependent manner. Interacts with MRS6. In terms of processing, phosphorylated by TORC1 kinase at multiple sites. Phosphorylation regulates nuclear localization and RP promoter binding.

The protein localises to the cytoplasm. It is found in the nucleus. In terms of biological role, transcription factor that regulates ribosomal protein (RP) and ribosome biogenesis (Ribi) gene expression in response to nutrients and stress. Promotes RP gene expression under optimal growth conditions. Leaves the nucleus upon environmental challenges, resulting in a down-regulation of RP gene transcription. The effect of the environmental cues on SFP1 localization is mediated through the TOR pathway. Also regulates the expression of genes involved in the G2/M transition during the mitotic cell cycle and the DNA-damage response. Required for carbon-source modulation of cell size. The polypeptide is Transcription factor SFP1 (SFP1) (Saccharomyces cerevisiae (strain ATCC 204508 / S288c) (Baker's yeast)).